A 297-amino-acid polypeptide reads, in one-letter code: MKIAAFDIGGTALKMGVMARDGRLLETARQSINDSDGDRILQAMLSWLAAHPSCEGIAISAPGYIDPHSGLITMGGAIRRFDNFAMKSWLETRTGLPVSVENDANCVLLAERWQGKAAEMANFLVLTIGTGIGGAIFCQHQLINGARFRAGEFGYMLTDRPGGRDPRRYSMNENCTLRVLRHRYAQHIGAPLDSVTGELIFDRYDAGDPVCQRLVAEFFNGLGHGLYNLVHIFDPQTIFIGGGVVERPGFLTLLRQHLAWFGIADYLDTVSHGNDAGLIGAVYHFNQLYRSPDDDRH.

5–11 (AFDIGGT) contacts ATP.

The protein belongs to the ROK (NagC/XylR) family. Homotetramer.

It carries out the reaction D-cellobiose + ATP = 6-phospho-beta-D-glucosyl-(1-&gt;4)-D-glucose + ADP + H(+). With respect to regulation, is inhibited by N-ethylmaleimide in vitro, but ATP affords considerable protection against the inhibitor. In terms of biological role, catalyzes the ATP-dependent phosphorylation of a wide variety of beta-D-glucosides, to produce 6-phospho-beta-D-glucosides including cellobiose-6'-P, gentiobiose-6'-P, cellobiitol-6-P, salicin-6-P, and arbutin-6-P. Is not able to phosphorylate alpha-D-glucosides. May have a dual role of kinase and transcriptional regulator of the cellobiose-PTS operon. The polypeptide is Beta-glucoside kinase (bglK) (Klebsiella pneumoniae).